The sequence spans 642 residues: Tigger transposable element derived 5 (642 aa).

The interval 1–54 (MYPASPSAGPALHPVPHRARLPRPRCLAEPPRSPAPGPGSTARPPPPAPGPRPR) is disordered. Residues 31 to 52 (PRSPAPGPGSTARPPPPAPGPR) are compositionally biased toward pro residues. The region spanning 56-107 (AVKMTFRKAYSIKDKLQAIERVKGGERQASVCRDFGVPGGTLRGWLKDEPKL) is the HTH psq-type domain. DNA-binding regions (H-T-H motif) lie at residues 83–103 (QASV…WLKD) and 154–187 (PVIQ…WQKR). Residues 121-194 (QRKKMRLANE…QKRHGISSQR (74 aa)) form the HTH CENPB-type domain. Residues 198-208 (EAEPPVAGPAP) are compositionally biased toward low complexity. The segment at 198 to 230 (EAEPPVAGPAPVKEEPAQPSSAGLLLDGTPATL) is disordered. One can recognise a DDE-1 domain in the interval 239–364 (DEQIYNANVT…CLQQKAVLLV (126 aa)). Residues 543-583 (GLPEGCGEEVAPAAPPSPASLPSSIGAGEEEEEEATEQGGV) are disordered.

This sequence belongs to the tigger transposable element derived protein family.

Its subcellular location is the nucleus. This Rattus norvegicus (Rat) protein is Tigger transposable element derived 5 (Tigd5).